Consider the following 551-residue polypeptide: Eukaryotic translation initiation factor 3 subunit D-2 (551 aa).

The interval 91–154 (TKPYQRGRYR…RNTQNMGRRF (64 aa)) is disordered. Residues 95–113 (QRGRYRPNMRNNVRSRGRT) are compositionally biased toward basic residues. The segment covering 121-136 (ASLGGSTAGGATASTT) has biased composition (low complexity). Residues 290–304 (QFDLLTVNETSVEPP) form an RNA gate region. The segment at 527-551 (PENAFDSDGDEEEESSDPLSNSNDN) is disordered. Residues 531–542 (FDSDGDEEEESS) are compositionally biased toward acidic residues.

The protein belongs to the eIF-3 subunit D family. As to quaternary structure, component of the eukaryotic translation initiation factor 3 (eIF-3) complex. The eIF-3 complex interacts with pix.

Its subcellular location is the cytoplasm. Its function is as follows. mRNA cap-binding component of the eukaryotic translation initiation factor 3 (eIF-3) complex, which is involved in protein synthesis of a specialized repertoire of mRNAs and, together with other initiation factors, stimulates binding of mRNA and methionyl-tRNAi to the 40S ribosome. The eIF-3 complex specifically targets and initiates translation of a subset of mRNAs involved in cell proliferation. In the eIF-3 complex, eif3d specifically recognizes and binds the 7-methylguanosine cap of a subset of mRNAs. In Drosophila melanogaster (Fruit fly), this protein is Eukaryotic translation initiation factor 3 subunit D-2.